A 663-amino-acid chain; its full sequence is MAU2 chromatid cohesion factor homolog (663 aa).

2 TPR repeats span residues 455–488 (GGFY…ANAE) and 495–528 (SCSL…ASKI).

This sequence belongs to the SCC4/mau-2 family. In terms of assembly, interacts with Nipped-B to form the cohesin loading complex.

Its subcellular location is the nucleus. It is found in the nucleoplasm. In terms of biological role, required for association of the cohesin complex with chromatin during interphase. Plays a role in sister chromatid cohesion and normal progression through prometaphase. The sequence is that of MAU2 chromatid cohesion factor homolog from Drosophila willistoni (Fruit fly).